Consider the following 155-residue polypeptide: Small ribosomal subunit protein uS7 (155 aa).

It belongs to the universal ribosomal protein uS7 family. As to quaternary structure, part of the 30S ribosomal subunit. Contacts proteins S9 and S11.

Functionally, one of the primary rRNA binding proteins, it binds directly to 16S rRNA where it nucleates assembly of the head domain of the 30S subunit. Is located at the subunit interface close to the decoding center, probably blocks exit of the E-site tRNA. The polypeptide is Small ribosomal subunit protein uS7 (Xanthomonas oryzae pv. oryzae (strain MAFF 311018)).